An 879-amino-acid polypeptide reads, in one-letter code: Leucine--tRNA ligase (879 aa).

The short motif at 45–55 (PYPSGALHMGH) is the 'HIGH' region element. The 'KMSKS' region motif lies at 637 to 641 (KMSKS). An ATP-binding site is contributed by Lys-640.

The protein belongs to the class-I aminoacyl-tRNA synthetase family.

It is found in the cytoplasm. It carries out the reaction tRNA(Leu) + L-leucine + ATP = L-leucyl-tRNA(Leu) + AMP + diphosphate. This is Leucine--tRNA ligase from Xylella fastidiosa (strain M12).